The following is a 141-amino-acid chain: Hemoglobin subunit alpha (141 aa).

Residues 1 to 141 enclose the Globin domain; the sequence is VLSADDKANV…VSTVLTSKYR (141 aa). Ser3 bears the Phosphoserine mark. Lys7 and Lys11 each carry N6-succinyllysine. At Lys16 the chain carries N6-acetyllysine; alternate. At Lys16 the chain carries N6-succinyllysine; alternate. A Phosphotyrosine modification is found at Tyr24. At Ser35 the chain carries Phosphoserine. At Lys40 the chain carries N6-succinyllysine. Residue Ser49 is modified to Phosphoserine. An O2-binding site is contributed by His58. Residue His87 coordinates heme b. Phosphoserine is present on Ser102. The residue at position 108 (Thr108) is a Phosphothreonine. Phosphoserine is present on residues Ser124 and Ser131. Residues Thr134 and Thr137 each carry the phosphothreonine modification. Ser138 carries the phosphoserine modification.

It belongs to the globin family. As to quaternary structure, heterotetramer of two alpha chains and two beta chains. Red blood cells.

In terms of biological role, involved in oxygen transport from the lung to the various peripheral tissues. In Peromyscus californicus (California mouse), this protein is Hemoglobin subunit alpha.